The chain runs to 183 residues: uncharacterized protein (183 aa).

Residues 7–23 (LFFTALCFGLTGCIAPP) traverse the membrane as a helical segment.

The protein resides in the membrane. This is an uncharacterized protein from Haemophilus influenzae (strain ATCC 51907 / DSM 11121 / KW20 / Rd).